Here is a 426-residue protein sequence, read N- to C-terminus: Serine--tRNA ligase (426 aa).

An L-serine-binding site is contributed by 231-233 (TAE). 262-264 (RSE) lines the ATP pocket. Glutamate 285 is an L-serine binding site. 349 to 352 (EISS) lines the ATP pocket. Serine 385 lines the L-serine pocket.

It belongs to the class-II aminoacyl-tRNA synthetase family. Type-1 seryl-tRNA synthetase subfamily. In terms of assembly, homodimer. The tRNA molecule binds across the dimer.

The protein resides in the cytoplasm. It catalyses the reaction tRNA(Ser) + L-serine + ATP = L-seryl-tRNA(Ser) + AMP + diphosphate + H(+). It carries out the reaction tRNA(Sec) + L-serine + ATP = L-seryl-tRNA(Sec) + AMP + diphosphate + H(+). Its pathway is aminoacyl-tRNA biosynthesis; selenocysteinyl-tRNA(Sec) biosynthesis; L-seryl-tRNA(Sec) from L-serine and tRNA(Sec): step 1/1. In terms of biological role, catalyzes the attachment of serine to tRNA(Ser). Is also able to aminoacylate tRNA(Sec) with serine, to form the misacylated tRNA L-seryl-tRNA(Sec), which will be further converted into selenocysteinyl-tRNA(Sec). In Lysinibacillus sphaericus (strain C3-41), this protein is Serine--tRNA ligase.